The primary structure comprises 286 residues: Nucleotide-binding protein VC_2532 (286 aa).

8–15 (GQSGAGKS) is a binding site for ATP. 56–59 (DIRN) is a GTP binding site.

It belongs to the RapZ-like family.

Displays ATPase and GTPase activities. The protein is Nucleotide-binding protein VC_2532 of Vibrio cholerae serotype O1 (strain ATCC 39315 / El Tor Inaba N16961).